Here is a 121-residue protein sequence, read N- to C-terminus: MIYGIGLDITELKRIASMAGRQKRFAERILTRSELDQYYELSEKRKNEFLAGRFAAKEAFSKAFGTGIGRQLSFQDIEIRKDQNGKPYIICTKLSQAAVHVSITHTKEYAAAQVVIERLSS.

The Mg(2+) site is built by aspartate 8 and glutamate 58.

The protein belongs to the P-Pant transferase superfamily. AcpS family. In terms of assembly, homotrimer. Mg(2+) is required as a cofactor.

The protein localises to the cytoplasm. The catalysed reaction is apo-[ACP] + CoA = holo-[ACP] + adenosine 3',5'-bisphosphate + H(+). In terms of biological role, transfers the 4'-phosphopantetheine moiety from coenzyme A to a Ser of fatty acid acyl-carrier-protein ACP. Also modifies the D-alanyl carrier protein but fails to recognize PCP and AcpK, an acyl carrier protein of secondary metabolism. The polypeptide is Holo-[acyl-carrier-protein] synthase (Bacillus subtilis (strain 168)).